The chain runs to 339 residues: Trace amine-associated receptor 1 (339 aa).

Residues M1 to S25 are Extracellular-facing. 3 disulfide bridges follow: C5–C178, C13–C88, and C96–C182. N10 and N17 each carry an N-linked (GlcNAc...) asparagine glycan. The helical transmembrane segment at L26–V46 threads the bilayer. The Cytoplasmic segment spans residues S47–N59. A helical transmembrane segment spans residues W60–S80. Over M81–I98 the chain is Extracellular. A helical transmembrane segment spans residues H99–I119. Residue D103 coordinates 2-phenylethylamine. Residues D120–N136 lie on the Cytoplasmic side of the membrane. Residues I137–G157 traverse the membrane as a helical segment. Over M158–K188 the chain is Extracellular. Residues I189–V209 traverse the membrane as a helical segment. At Y210–T252 the chain is on the cytoplasmic side. Residues L253 to M273 traverse the membrane as a helical segment. At D274–D287 the chain is on the extracellular side. A helical transmembrane segment spans residues V288 to Y308. At P309–S339 the chain is on the cytoplasmic side.

It belongs to the G-protein coupled receptor 1 family.

Its subcellular location is the endomembrane system. The protein localises to the endoplasmic reticulum membrane. It is found in the cell membrane. In terms of biological role, intracellular G-protein coupled receptor for trace amines, which recognizes endogenous amine-containing metabolites such as beta-phenylethylamine (beta-PEA), 3-iodothyronamine (T1AM), isoamylamine (IAA), cadaverine (CAD), cyclohexylamine (CHA), p-tyramine (p-TYR), trimethylamine (TMA), octopamine and tryptamine. Also functions as a receptor for various drugs and psychoactive substances, such as amphetamine and methamphetamine. Unresponsive to classical biogenic amines, such as epinephrine and histamine and only partially activated by dopamine and serotonin. Expressed in both the central and peripheral nervous system: TAAR1 activation regulates the activity of several neurotransmitter signaling pathways by (1) decreasing the basal firing rates of the neurons involved and by (2) lowering the sensitivity of receptors to neurotransmitters. Ligand binding causes a conformation change that triggers signaling via guanine nucleotide-binding proteins (G proteins) and modulates the activity of downstream effectors. TAAR1 is coupled with different G(i)/G(o)-, G(s)- or G(q)/G(11) classes of G alpha proteins depending on the ligand. CAD-binding is coupled to G(i)/G(o) G alpha proteins and mediates inhibition of adenylate cyclase activity. T1AM- or beta-PEA-binding is coupled to G(s) G alpha proteins and mediates activation of adenylate cyclase activity. CHA- or IAA-binding is coupled to G(q)/G(11) G alpha proteins and activates phospholipase C-beta, releasing diacylglycerol (DAG) and inositol 1,4,5-trisphosphate (IP3) second messengers. TMA-binding is coupled with all three G(i)/G(o)-, G(s)- or G(q)/G(11) G alpha protein subtypes. The chain is Trace amine-associated receptor 1 (TAAR1) from Pan troglodytes (Chimpanzee).